We begin with the raw amino-acid sequence, 193 residues long: Imidazoleglycerol-phosphate dehydratase (193 aa).

This sequence belongs to the imidazoleglycerol-phosphate dehydratase family.

Its subcellular location is the cytoplasm. It catalyses the reaction D-erythro-1-(imidazol-4-yl)glycerol 3-phosphate = 3-(imidazol-4-yl)-2-oxopropyl phosphate + H2O. It functions in the pathway amino-acid biosynthesis; L-histidine biosynthesis; L-histidine from 5-phospho-alpha-D-ribose 1-diphosphate: step 6/9. The chain is Imidazoleglycerol-phosphate dehydratase from Saccharolobus islandicus (strain Y.G.57.14 / Yellowstone #1) (Sulfolobus islandicus).